We begin with the raw amino-acid sequence, 310 residues long: p-hydroxybenzoic acid efflux pump subunit AaeA (310 aa).

The chain crosses the membrane as a helical span at residues 12-32; sequence AITVVLVILAFIAIFNAWVYY.

Belongs to the membrane fusion protein (MFP) (TC 8.A.1) family.

The protein resides in the cell inner membrane. Its function is as follows. Forms an efflux pump with AaeB. This chain is p-hydroxybenzoic acid efflux pump subunit AaeA, found in Shigella flexneri.